A 1166-amino-acid polypeptide reads, in one-letter code: Pesticidal crystal protein Cry1Ga (1166 aa).

Belongs to the delta endotoxin family.

Its function is as follows. Promotes colloidosmotic lysis by binding to the midgut epithelial cells of insects. The chain is Pesticidal crystal protein Cry1Ga (cry1Ga) from Bacillus thuringiensis.